The primary structure comprises 455 residues: Ribulose bisphosphate carboxylase large chain (455 aa).

K5 is modified (N6,N6,N6-trimethyllysine). Residues N114 and T164 each contribute to the substrate site. The Proton acceptor role is filled by K166. Residue K168 coordinates substrate. The Mg(2+) site is built by K192, D194, and E195. N6-carboxylysine is present on K192. The active-site Proton acceptor is the H285. R286, H318, and S370 together coordinate substrate.

The protein belongs to the RuBisCO large chain family. Type I subfamily. In terms of assembly, heterohexadecamer of 8 large chains and 8 small chains; disulfide-linked. The disulfide link is formed within the large subunit homodimers. It depends on Mg(2+) as a cofactor. The disulfide bond which can form in the large chain dimeric partners within the hexadecamer appears to be associated with oxidative stress and protein turnover.

Its subcellular location is the plastid. The protein localises to the chloroplast. The enzyme catalyses 2 (2R)-3-phosphoglycerate + 2 H(+) = D-ribulose 1,5-bisphosphate + CO2 + H2O. It carries out the reaction D-ribulose 1,5-bisphosphate + O2 = 2-phosphoglycolate + (2R)-3-phosphoglycerate + 2 H(+). Functionally, ruBisCO catalyzes two reactions: the carboxylation of D-ribulose 1,5-bisphosphate, the primary event in carbon dioxide fixation, as well as the oxidative fragmentation of the pentose substrate in the photorespiration process. Both reactions occur simultaneously and in competition at the same active site. The protein is Ribulose bisphosphate carboxylase large chain of Vachellia farnesiana (Sweet acacia).